Here is a 371-residue protein sequence, read N- to C-terminus: Phosphate acyltransferase (371 aa).

The protein belongs to the PlsX family. As to quaternary structure, homodimer. Probably interacts with PlsY.

It localises to the cytoplasm. The enzyme catalyses a fatty acyl-[ACP] + phosphate = an acyl phosphate + holo-[ACP]. It participates in lipid metabolism; phospholipid metabolism. Catalyzes the reversible formation of acyl-phosphate (acyl-PO(4)) from acyl-[acyl-carrier-protein] (acyl-ACP). This enzyme utilizes acyl-ACP as fatty acyl donor, but not acyl-CoA. In Ruegeria pomeroyi (strain ATCC 700808 / DSM 15171 / DSS-3) (Silicibacter pomeroyi), this protein is Phosphate acyltransferase.